Reading from the N-terminus, the 272-residue chain is Hemin import ATP-binding protein HmuV (272 aa).

In terms of domain architecture, ABC transporter spans 2–255 (LNADHLHVAR…EPIARCYGFR (254 aa)). 34-41 (GRNGAGKS) contributes to the ATP binding site.

This sequence belongs to the ABC transporter superfamily. Heme (hemin) importer (TC 3.A.1.14.5) family. In terms of assembly, the complex is composed of two ATP-binding proteins (HmuV), two transmembrane proteins (HmuU) and a solute-binding protein (HmuT).

The protein resides in the cell inner membrane. In terms of biological role, part of the ABC transporter complex HmuTUV involved in hemin import. Responsible for energy coupling to the transport system. This Burkholderia mallei (strain ATCC 23344) protein is Hemin import ATP-binding protein HmuV.